A 344-amino-acid chain; its full sequence is Fibronectin type 3 and ankyrin repeat domains 1 protein (344 aa).

One can recognise a Fibronectin type-III domain in the interval 11–108 (KPHPPVVGKV…VVSVATTREP (98 aa)). 6 ANK repeats span residues 109-139 (ISSE…MIDV), 143-172 (FGFT…DVNL), 176-205 (SGKD…SWEA), 209-238 (GGCT…EVDV), 243-273 (SGWT…DVNI), and 277-306 (DGKT…DATV).

As to quaternary structure, interacts with COPS5; regulates the phosphorylation of JUN and the transcriptional activity of AP-1. Interacts with RYBP; may prevent the ubiquitin-mediated proteasomal degradation of FANK1. In terms of processing, polyubiquitinated. Polyubiquitination leads to proteasomal degradation. In terms of tissue distribution, mostly restricted to testis (at protein level), including mid to late pachytene spermatocytes (stages VI-X), diplotene spermatocytes (stage XI), meiotically dividing spermatocytes (stage XII) and spermatids in steps 1-14. Highest levels in late pachytene spermatocytes and spermatids in steps 1-9.

Its subcellular location is the nucleus. It localises to the cytoplasm. The protein resides in the cytosol. It is found in the cytoskeleton. The protein localises to the cilium basal body. Its subcellular location is the cell projection. It localises to the cilium. Its function is as follows. Through the activation of JUN and AP-1-mediated transcription, may regulate apoptosis. This is Fibronectin type 3 and ankyrin repeat domains 1 protein from Mus musculus (Mouse).